Here is a 20-residue protein sequence, read N- to C-terminus: FIQYLAPLIPHAVKAISDLI.

The residue at position 20 (I20) is an Isoleucine amide.

Expressed by the skin dorsal glands.

The protein localises to the secreted. Functionally, has no antimicrobial activities against bacteria (E.coli and S.aureus) nor against the fungus C.albicans. This chain is Kassinatuerin-2, found in Kassina senegalensis (Senegal running frog).